The primary structure comprises 187 residues: Adenylate kinase (187 aa).

12–17 (GAGKGT) contributes to the ATP binding site. The segment at 32–61 (STGDIFRANLAENTELGQKARQFMDAGDLV) is NMP. AMP contacts are provided by residues threonine 33, arginine 38, 59-61 (DLV), 87-90 (GYPR), and glutamine 94. The segment at 128–134 (GRGRADD) is LID. Position 129 (arginine 129) interacts with ATP. 2 residues coordinate AMP: arginine 131 and arginine 142. Arginine 170 is an ATP binding site.

The protein belongs to the adenylate kinase family. Monomer.

It is found in the cytoplasm. The catalysed reaction is AMP + ATP = 2 ADP. Its pathway is purine metabolism; AMP biosynthesis via salvage pathway; AMP from ADP: step 1/1. Catalyzes the reversible transfer of the terminal phosphate group between ATP and AMP. Plays an important role in cellular energy homeostasis and in adenine nucleotide metabolism. This Leuconostoc mesenteroides subsp. mesenteroides (strain ATCC 8293 / DSM 20343 / BCRC 11652 / CCM 1803 / JCM 6124 / NCDO 523 / NBRC 100496 / NCIMB 8023 / NCTC 12954 / NRRL B-1118 / 37Y) protein is Adenylate kinase.